The chain runs to 349 residues: MATGTQPDAGQILNSLINSILLIDDNLAIHYANPAAQQLLAQSSRKLFGTPLPELLSYFSLNIELMQESLEAGQGFTDNEVTLVIDGRSHILSVTAQRMPDGMILLEMAPMDNQRRLSQEQLQHAQQVAARDLVRGLAHEIKNPLGGLRGAAQLLSKALPDPSLLEYTKVIIEQADRLRNLVDRLLGPQLPGTRVTESIHKVAERVVTLVSMELPDNVRLIRDYDPSLPELAHDPDQIEQVLLNIVRNALQALGPEGGEIILRTRTAFQLTLHGERYRLAARIDVEDNGPGIPPHLQDTLFYPMVSGREGGTGLGLSIARNLIDQHSGKIEFTSWPGHTEFSVYLPIRK.

The PAS domain maps to 5–78; it reads TQPDAGQILN…SLEAGQGFTD (74 aa). Residues 136–349 form the Histidine kinase domain; it reads GLAHEIKNPL…EFSVYLPIRK (214 aa). The residue at position 139 (histidine 139) is a Phosphohistidine; by autocatalysis. Lysine 329 contacts ATP.

Post-translationally, autophosphorylated.

The protein resides in the cytoplasm. The enzyme catalyses ATP + protein L-histidine = ADP + protein N-phospho-L-histidine.. Its function is as follows. Member of the two-component regulatory system NtrB/NtrC, which controls expression of the nitrogen-regulated (ntr) genes in response to nitrogen limitation. Under conditions of nitrogen limitation, NtrB autophosphorylates and transfers the phosphoryl group to NtrC. In the presence of nitrogen, acts as a phosphatase that dephosphorylates and inactivates NtrC. This Escherichia coli O157:H7 protein is Sensory histidine kinase/phosphatase NtrB (glnL).